The primary structure comprises 857 residues: Autoinducer 2 sensor kinase/phosphatase LuxQ (857 aa).

Transmembrane regions (helical) follow at residues 20–40 (IIFL…YYFS) and 283–303 (LGLA…RSWI). A Histidine kinase domain is found at 490–712 (KMSHEIRTPL…TFYLSIPVEK (223 aa)). His-493 is modified (phosphohistidine; by autocatalysis). The 116-residue stretch at 735-850 (KVLLVEDNHT…ELHDELLHFK (116 aa)) folds into the Response regulatory domain. Position 784 is a 4-aspartylphosphate (Asp-784).

In terms of assembly, binds the complex formed by the autoinducer and LuxP.

The protein resides in the cell inner membrane. The catalysed reaction is ATP + protein L-histidine = ADP + protein N-phospho-L-histidine.. At low cell density, in absence of autoinducer has a kinase activity, and autophosphorylates on a histidine residue. The phosphoryl group is then transferred to an aspartate residue in the response regulator domain. The phosphoryl group is transferred to LuxU, and ultimately to LuxO. At high cell density, in the presence of autoinducer, the kinase activity is inactivated, and the response regulator domain has a phosphatase activity. This is Autoinducer 2 sensor kinase/phosphatase LuxQ (luxQ) from Vibrio vulnificus (strain YJ016).